A 446-amino-acid chain; its full sequence is Exodeoxyribonuclease 7 large subunit (446 aa).

It belongs to the XseA family. In terms of assembly, heterooligomer composed of large and small subunits.

The protein resides in the cytoplasm. It carries out the reaction Exonucleolytic cleavage in either 5'- to 3'- or 3'- to 5'-direction to yield nucleoside 5'-phosphates.. Functionally, bidirectionally degrades single-stranded DNA into large acid-insoluble oligonucleotides, which are then degraded further into small acid-soluble oligonucleotides. In Streptococcus pyogenes serotype M49 (strain NZ131), this protein is Exodeoxyribonuclease 7 large subunit.